Consider the following 565-residue polypeptide: DNA-binding protein scr1 (565 aa).

Over residues 1 to 19 (MSEATTATTTGKPSRSTKN) the composition is skewed to polar residues. The tract at residues 1–25 (MSEATTATTTGKPSRSTKNPDAPRP) is disordered. 2 consecutive C2H2-type zinc fingers follow at residues 26-48 (YKCP…IRTH) and 54-78 (HVCT…ARIH). 4 disordered regions span residues 79-119 (TNAN…VHMT), 261-303 (SNAP…STGS), 390-434 (RPVS…DDPS), and 466-565 (ASTP…MTKP). The span at 80–102 (NANSRRNAAAAAAANNSARSSNS) shows a compositional bias: low complexity. 3 stretches are compositionally biased toward polar residues: residues 108 to 119 (EPSTNNAGVHMT), 276 to 286 (LPSSSNTSPNH), and 294 to 303 (GLTSNSSTGS). Positions 391–413 (PVSPCSTAPSSPTFSTRSFSPTP) are enriched in low complexity. Positions 466-478 (ASTPASGAVSRTP) are enriched in polar residues. Low complexity-rich tracts occupy residues 479–492 (SSVS…VNSS), 517–526 (FSSSSRVSVS), and 537–555 (SSST…PAFS).

Belongs to the creA/MIG C2H2-type zinc-finger protein family.

It is found in the nucleus. In terms of biological role, involved in carbon catabolite repression. Represses the transcription of various genes including the inv1 gene. This chain is DNA-binding protein scr1 (scr1), found in Schizosaccharomyces pombe (strain 972 / ATCC 24843) (Fission yeast).